The chain runs to 72 residues: Translation initiation factor IF-1 (72 aa).

The region spanning Met1–Lys72 is the S1-like domain.

This sequence belongs to the IF-1 family. As to quaternary structure, component of the 30S ribosomal translation pre-initiation complex which assembles on the 30S ribosome in the order IF-2 and IF-3, IF-1 and N-formylmethionyl-tRNA(fMet); mRNA recruitment can occur at any time during PIC assembly.

It localises to the cytoplasm. In terms of biological role, one of the essential components for the initiation of protein synthesis. Stabilizes the binding of IF-2 and IF-3 on the 30S subunit to which N-formylmethionyl-tRNA(fMet) subsequently binds. Helps modulate mRNA selection, yielding the 30S pre-initiation complex (PIC). Upon addition of the 50S ribosomal subunit IF-1, IF-2 and IF-3 are released leaving the mature 70S translation initiation complex. This chain is Translation initiation factor IF-1, found in Chlorobium chlorochromatii (strain CaD3).